Reading from the N-terminus, the 348-residue chain is F(420)H(2) dehydrogenase subunit H (348 aa).

8 consecutive transmembrane segments (helical) span residues 20-40 (GVVG…AVWL), 93-113 (IFMM…AVFI), 127-147 (ISVL…FMIA), 172-192 (PLGI…IVEI), 198-218 (LLWN…ALMA), 259-279 (ILGS…PAFV), 286-306 (GLIA…MTII), and 328-348 (LLPL…YLGA).

It belongs to the complex I subunit 1 family. In terms of assembly, the FPO complex is composed of at least 13 different subunits. FpoA, FpoH, FpoJ, FpoK, FpoL, FpoM and FpoN proteins constitute the membrane sector of the complex.

The protein resides in the cell membrane. It catalyses the reaction methanophenazine + reduced coenzyme F420-(gamma-L-Glu)(n) = dihydromethanophenazine + oxidized coenzyme F420-(gamma-L-Glu)(n) + H(+). In terms of biological role, component of the F(420)H(2) dehydrogenase (FPO complex) which is part of the energy-conserving F(420)H(2):heterodisulfide oxidoreductase system. The membrane-bound electron transfer system of the complex plays an important role in the metabolism of methylotrophic methanogens when the organisms grow on methanol or methylamines. Catalyzes the oxidation of methanophenazine to dihydromethanophenazine. It shuttles electrons from F(420)H(2), via FAD and iron-sulfur (Fe-S) centers, to methanophenazine (an electron carrier in the membrane). It couples the redox reaction to proton translocation (for every two electrons transferred, two hydrogen ions are translocated across the cytoplasmic membrane), and thus conserves the redox energy in a proton gradient. This chain is F(420)H(2) dehydrogenase subunit H, found in Methanosarcina acetivorans (strain ATCC 35395 / DSM 2834 / JCM 12185 / C2A).